A 450-amino-acid chain; its full sequence is MPKNKKRNTPHRGGSGGGGSGAAATTAATAGGQHRNVQPFSDEDASIETMSHCSGYSDPSSFAEDGPEVLDEEGTQEDLEYKLKGLIDLTLDKSAKTRQAALEGIKNALASRMLYEFILERRMTLTDSIERCLKKGKSDEQRAAAALASVLCIQLGPGIESEEVLKTLGPVLKKIICDGTASIQARQTCATCFGVCCFIATDDITELYSTLQCLENIFTKSYLKEKDSNVICSTPNTALHISSLLAWTLLLTICPLSEVKKKLEMHVHKLPSLLSSDDVNMRIAAGESLALLFELARGMESDFFYEDMESLTQMLRALATDGNKHRAKVDKRKQRSVFRDILRAVEERDFPTETVKFGPERMYIDCWVKKRTYDTFKEILGSGMQYHLQSNEFLRNVFELGPPVMLDAATLKTMKISRFERHLYNSAAFKARTKARSKCRDKRADVGEFF.

Residues 1 to 10 (MPKNKKRNTP) are compositionally biased toward basic residues. The interval 1-46 (MPKNKKRNTPHRGGSGGGGSGAAATTAATAGGQHRNVQPFSDEDAS) is disordered. A compositionally biased stretch (low complexity) spans 22–32 (AAATTAATAGG).

The protein belongs to the IFRD family. As to quaternary structure, interacts with PSIP1/LEDGF.

Its function is as follows. Could play a role in regulating gene activity in the proliferative and/or differentiative pathways induced by NGF. May be an autocrine factor that attenuates or amplifies the initial ligand-induced signal. This Sus scrofa (Pig) protein is Interferon-related developmental regulator 1 (IFRD1).